The sequence spans 78 residues: Esculentin-2ISa (78 aa).

A signal peptide spans 1–22 (MFTLKKSLLLLFFLGTISLSVC). A propeptide spans 23–39 (KQERDADYEDKGEVEEV) (removed in mature form). The cysteines at positions 72 and 78 are disulfide-linked.

As to expression, expressed by the skin glands.

It localises to the secreted. Functionally, has antimicrobial activity against Gram-negative bacterium E.coli ATCC 8739 (MIC=12.5 ug), against Gram positive bacteria S.aureus ATCC 6538 (MIC=3.1 ug), methicillin-resistant S.aureus ATCC 43300 (MIC=25 ug), B.subtilis ATCC 6633 (MIC=6.3 ug) and against fungus C.albicans ATCC 90028 (MIC=100 ug). This is Esculentin-2ISa from Odorrana ishikawae (Ishikawa's frog).